We begin with the raw amino-acid sequence, 244 residues long: Capsid protein (244 aa).

A Bipartite nuclear localization signal motif is present at residues 1–24; that stretch reads MSTSKRKRGDDANWSKRVPKKKPS. Residues 1–39 form a disordered region; it reads MSTSKRKRGDDANWSKRVPKKKPSSAGLKRAGSKADRPS.

It belongs to the geminiviridae capsid protein family. As to quaternary structure, homomultimer. Interacts with the movement protein. Binds to single-stranded and double-stranded viral DNA.

It localises to the virion. The protein resides in the host nucleus. Functionally, encapsidates the viral genome into characteristic twinned ('geminate') particles. Binds the genomic viral ssDNA and shuttles it into and out of the cell nucleus. Plays a role in protection of the genome from degradation, virus acquisition and transmission by insect vectors, infectivity, and systemic movement. The CP of monopartite geminiviruses is absolutely essential for virus movement. The chain is Capsid protein from Avena sativa (Oat).